A 308-amino-acid polypeptide reads, in one-letter code: UDP-N-acetylenolpyruvoylglucosamine reductase (308 aa).

In terms of domain architecture, FAD-binding PCMH-type spans 22–185 (RVGGPADWLF…TEATFRAEAG (164 aa)). The active site involves Arg-165. The segment covering 197–211 (QIARRDSSQPTKERS) has biased composition (basic and acidic residues). Positions 197–228 (QIARRDSSQPTKERSAGSTFRNPAGFSSTGRA) are disordered. Residues 212–226 (AGSTFRNPAGFSSTG) show a composition bias toward polar residues. Ser-214 acts as the Proton donor in catalysis. Glu-296 is a catalytic residue.

The protein belongs to the MurB family. FAD serves as cofactor.

It localises to the cytoplasm. The catalysed reaction is UDP-N-acetyl-alpha-D-muramate + NADP(+) = UDP-N-acetyl-3-O-(1-carboxyvinyl)-alpha-D-glucosamine + NADPH + H(+). The protein operates within cell wall biogenesis; peptidoglycan biosynthesis. Cell wall formation. The protein is UDP-N-acetylenolpyruvoylglucosamine reductase of Cereibacter sphaeroides (strain ATCC 17023 / DSM 158 / JCM 6121 / CCUG 31486 / LMG 2827 / NBRC 12203 / NCIMB 8253 / ATH 2.4.1.) (Rhodobacter sphaeroides).